The chain runs to 201 residues: Ubiquinone biosynthesis accessory factor UbiJ (201 aa).

The SCP2 domain maps to Leu-15 to Ala-112.

Belongs to the UbiJ family. As to quaternary structure, component of the Ubi complex metabolon, which regroups five ubiquinone biosynthesis proteins (UbiE, UbiF, UbiG, UbiH and UbiI) and two accessory factors (UbiK and the lipid-binding protein UbiJ). Interacts with UbiK and forms a complex composed of 2 UbiK subunits and 1 UbiJ subunit. The UbiK-UbiJ complex interacts with palmitoleic acid.

It is found in the cytoplasm. Its pathway is cofactor biosynthesis; ubiquinone biosynthesis. In terms of biological role, required for ubiquinone (coenzyme Q) biosynthesis under aerobic conditions. Binds hydrophobic ubiquinone biosynthetic intermediates via its SCP2 domain and is essential for the stability of the Ubi complex. May constitute a docking platform where Ubi enzymes assemble and access their SCP2-bound polyprenyl substrates. In Escherichia coli (strain K12), this protein is Ubiquinone biosynthesis accessory factor UbiJ.